Here is a 704-residue protein sequence, read N- to C-terminus: DNA ligase (704 aa).

NAD(+) contacts are provided by residues 43-47, 92-93, and E124; these read DADYD and SL. The active-site N6-AMP-lysine intermediate is the K126. Residues R147, E182, K298, and K322 each contribute to the NAD(+) site. Zn(2+)-binding residues include C427, C430, C445, and C451. The BRCT domain occupies 625–704; that stretch reads PVESPIAGKI…DAWLRLIGDA (80 aa).

Belongs to the NAD-dependent DNA ligase family. LigA subfamily. The cofactor is Mg(2+). Requires Mn(2+) as cofactor.

It catalyses the reaction NAD(+) + (deoxyribonucleotide)n-3'-hydroxyl + 5'-phospho-(deoxyribonucleotide)m = (deoxyribonucleotide)n+m + AMP + beta-nicotinamide D-nucleotide.. In terms of biological role, DNA ligase that catalyzes the formation of phosphodiester linkages between 5'-phosphoryl and 3'-hydroxyl groups in double-stranded DNA using NAD as a coenzyme and as the energy source for the reaction. It is essential for DNA replication and repair of damaged DNA. This chain is DNA ligase, found in Cereibacter sphaeroides (strain ATCC 17025 / ATH 2.4.3) (Rhodobacter sphaeroides).